The primary structure comprises 621 residues: Type 2 DNA topoisomerase 6 subunit B (621 aa).

Residues asparagine 48, aspartate 80, 101 to 102, 111 to 118, and lysine 435 contribute to the ATP site; these read SR and GQQGIGIS.

It belongs to the TOP6B family. As to quaternary structure, homodimer. Heterotetramer of two Top6A and two Top6B chains.

The enzyme catalyses ATP-dependent breakage, passage and rejoining of double-stranded DNA.. In terms of biological role, relaxes both positive and negative superturns and exhibits a strong decatenase activity. The sequence is that of Type 2 DNA topoisomerase 6 subunit B from Methanosarcina barkeri (strain Fusaro / DSM 804).